The primary structure comprises 154 residues: Small ribosomal subunit protein uS15 (154 aa).

The span at 1–11 shows a compositional bias: basic residues; sequence MSRLHAHKRYH. The disordered stretch occupies residues 1-24; the sequence is MSRLHAHKRYHGQSGSKRPLRTTK.

The protein belongs to the universal ribosomal protein uS15 family. Part of the 30S ribosomal subunit.

The chain is Small ribosomal subunit protein uS15 from Nanoarchaeum equitans (strain Kin4-M).